The sequence spans 208 residues: ATP-dependent Clp protease proteolytic subunit (208 aa).

The Nucleophile role is filled by serine 107. Histidine 132 is an active-site residue.

Belongs to the peptidase S14 family. In terms of assembly, fourteen ClpP subunits assemble into 2 heptameric rings which stack back to back to give a disk-like structure with a central cavity, resembling the structure of eukaryotic proteasomes.

Its subcellular location is the cytoplasm. It carries out the reaction Hydrolysis of proteins to small peptides in the presence of ATP and magnesium. alpha-casein is the usual test substrate. In the absence of ATP, only oligopeptides shorter than five residues are hydrolyzed (such as succinyl-Leu-Tyr-|-NHMec, and Leu-Tyr-Leu-|-Tyr-Trp, in which cleavage of the -Tyr-|-Leu- and -Tyr-|-Trp bonds also occurs).. In terms of biological role, cleaves peptides in various proteins in a process that requires ATP hydrolysis. Has a chymotrypsin-like activity. Plays a major role in the degradation of misfolded proteins. The polypeptide is ATP-dependent Clp protease proteolytic subunit (Methylorubrum extorquens (strain CM4 / NCIMB 13688) (Methylobacterium extorquens)).